The sequence spans 433 residues: 23S rRNA (uracil(1939)-C(5))-methyltransferase RlmD (433 aa).

The TRAM domain maps to methionine 1–arginine 53. Positions 66, 72, 75, and 154 each coordinate [4Fe-4S] cluster. Residues glutamine 263, phenylalanine 292, asparagine 297, glutamate 313, asparagine 341, and aspartate 362 each coordinate S-adenosyl-L-methionine. Residue cysteine 389 is the Nucleophile of the active site.

This sequence belongs to the class I-like SAM-binding methyltransferase superfamily. RNA M5U methyltransferase family. RlmD subfamily.

It catalyses the reaction uridine(1939) in 23S rRNA + S-adenosyl-L-methionine = 5-methyluridine(1939) in 23S rRNA + S-adenosyl-L-homocysteine + H(+). In terms of biological role, catalyzes the formation of 5-methyl-uridine at position 1939 (m5U1939) in 23S rRNA. The polypeptide is 23S rRNA (uracil(1939)-C(5))-methyltransferase RlmD (Aromatoleum aromaticum (strain DSM 19018 / LMG 30748 / EbN1) (Azoarcus sp. (strain EbN1))).